The chain runs to 475 residues: Endoglucanase A (475 aa).

Positions 1-26 (MKKTTAFLLCFLMIFTALLPMQNANA) are cleaved as a signal peptide. His-147 is an active-site residue. Glu-195 acts as the Proton donor in catalysis. The active-site Nucleophile is Glu-332. In terms of domain architecture, Dockerin spans 409 to 474 (PVIVYGDYNN…LLGMVSKLPS (66 aa)).

Belongs to the glycosyl hydrolase 5 (cellulase A) family.

It catalyses the reaction Endohydrolysis of (1-&gt;4)-beta-D-glucosidic linkages in cellulose, lichenin and cereal beta-D-glucans.. The biological conversion of cellulose to glucose generally requires three types of hydrolytic enzymes: (1) Endoglucanases which cut internal beta-1,4-glucosidic bonds; (2) Exocellobiohydrolases that cut the disaccharide cellobiose from the non-reducing end of the cellulose polymer chain; (3) Beta-1,4-glucosidases which hydrolyze the cellobiose and other short cello-oligosaccharides to glucose. In Ruminiclostridium cellulolyticum (strain ATCC 35319 / DSM 5812 / JCM 6584 / H10) (Clostridium cellulolyticum), this protein is Endoglucanase A (celCCA).